A 261-amino-acid polypeptide reads, in one-letter code: Ribosomal RNA small subunit methyltransferase A (261 aa).

Residues His13, Leu15, Gly40, Glu61, Asp85, and Asn105 each contribute to the S-adenosyl-L-methionine site.

This sequence belongs to the class I-like SAM-binding methyltransferase superfamily. rRNA adenine N(6)-methyltransferase family. RsmA subfamily.

It localises to the cytoplasm. The enzyme catalyses adenosine(1518)/adenosine(1519) in 16S rRNA + 4 S-adenosyl-L-methionine = N(6)-dimethyladenosine(1518)/N(6)-dimethyladenosine(1519) in 16S rRNA + 4 S-adenosyl-L-homocysteine + 4 H(+). In terms of biological role, specifically dimethylates two adjacent adenosines (A1518 and A1519) in the loop of a conserved hairpin near the 3'-end of 16S rRNA in the 30S particle. May play a critical role in biogenesis of 30S subunits. The sequence is that of Ribosomal RNA small subunit methyltransferase A from Flavobacterium johnsoniae (strain ATCC 17061 / DSM 2064 / JCM 8514 / BCRC 14874 / CCUG 350202 / NBRC 14942 / NCIMB 11054 / UW101) (Cytophaga johnsonae).